Consider the following 166-residue polypeptide: MFPMVTKFMNYGQQTVRAARYIGQGFIITLSHANRLPVTIQYPYEKLITSERFRGRIHFEFDKCIACEVCVRVCPIDLPVVDWKLETDIRKKRLLNYSIDFGICIFCGNCVEYCPTNCLSMTEEYELSTYDRHELNYNQIALGRLPMSIIDDYTIRTILNLPEIKT.

4Fe-4S ferredoxin-type domains are found at residues 55 to 84 (GRIH…VDWK) and 95 to 124 (LNYS…MTEE). 8 residues coordinate [4Fe-4S] cluster: Cys-64, Cys-67, Cys-70, Cys-74, Cys-104, Cys-107, Cys-110, and Cys-114.

The protein belongs to the complex I 23 kDa subunit family. As to quaternary structure, NDH is composed of at least 16 different subunits, 5 of which are encoded in the nucleus. [4Fe-4S] cluster serves as cofactor.

It localises to the plastid. The protein resides in the chloroplast thylakoid membrane. It catalyses the reaction a plastoquinone + NADH + (n+1) H(+)(in) = a plastoquinol + NAD(+) + n H(+)(out). The catalysed reaction is a plastoquinone + NADPH + (n+1) H(+)(in) = a plastoquinol + NADP(+) + n H(+)(out). In terms of biological role, NDH shuttles electrons from NAD(P)H:plastoquinone, via FMN and iron-sulfur (Fe-S) centers, to quinones in the photosynthetic chain and possibly in a chloroplast respiratory chain. The immediate electron acceptor for the enzyme in this species is believed to be plastoquinone. Couples the redox reaction to proton translocation, and thus conserves the redox energy in a proton gradient. The sequence is that of NAD(P)H-quinone oxidoreductase subunit I, chloroplastic from Palafoxia arida (Spanish needles).